The following is a 333-amino-acid chain: Dihydroorotate dehydrogenase (quinone) (333 aa).

FMN contacts are provided by residues 56-60 (AGLDK) and Thr80. Residue Lys60 participates in substrate binding. 105-109 (NRMGF) is a binding site for substrate. Asn133 and Asn166 together coordinate FMN. Asn166 lines the substrate pocket. Catalysis depends on Ser169, which acts as the Nucleophile. Position 171 (Asn171) interacts with substrate. Positions 211 and 239 each coordinate FMN. 240–241 (NT) is a substrate binding site. FMN contacts are provided by residues Gly262, Gly291, and 312–313 (YS).

This sequence belongs to the dihydroorotate dehydrogenase family. Type 2 subfamily. Monomer. The cofactor is FMN.

Its subcellular location is the cell membrane. It catalyses the reaction (S)-dihydroorotate + a quinone = orotate + a quinol. Its pathway is pyrimidine metabolism; UMP biosynthesis via de novo pathway; orotate from (S)-dihydroorotate (quinone route): step 1/1. Functionally, catalyzes the conversion of dihydroorotate to orotate with quinone as electron acceptor. This chain is Dihydroorotate dehydrogenase (quinone), found in Legionella pneumophila (strain Lens).